The following is a 91-amino-acid chain: Large ribosomal subunit protein eL31 (91 aa).

This sequence belongs to the eukaryotic ribosomal protein eL31 family.

This Pyrobaculum calidifontis (strain DSM 21063 / JCM 11548 / VA1) protein is Large ribosomal subunit protein eL31.